The primary structure comprises 295 residues: Probable palmitoyltransferase ZDHHC24 (295 aa).

The Cytoplasmic segment spans residues 1-20; sequence MTSFMSRVWCKVESTGRQLP. Residues 21 to 41 traverse the membrane as a helical segment; the sequence is IVLNAVLVFSITAEVSYLVLV. The Extracellular portion of the chain corresponds to 42-60; that stretch reads EAPFEPEQKKTDWSTIWTG. Residues 61–81 traverse the membrane as a helical segment; that stretch reads LHLFAQYFMLGNITWNASLFV. Residues 82–151 lie on the Cytoplasmic side of the membrane; the sequence is KTNPSIRGVF…HNYRYFLTCL (70 aa). The DHHC domain occupies 102–152; the sequence is RYCYNCETHTPPRCSHCYDCNVCVLRRDHHCVFFGQCVGFHNYRYFLTCLL. Cysteine 132 functions as the S-palmitoyl cysteine intermediate in the catalytic mechanism. A helical membrane pass occupies residues 152–172; sequence LFMWAGLLYAVVMNAEVFIFI. Residues 173 to 176 are Extracellular-facing; that stretch reads LKEG. Residues 177 to 197 form a helical membrane-spanning segment; that stretch reads VTFHSVMLLLVPWIMLVSGQV. At 198-203 the chain is on the cytoplasmic side; it reads TTRAFA. The chain crosses the membrane as a helical span at residues 204–224; sequence FAFIADTCVVGFLLVAAFLFF. Over 225-295 the chain is Extracellular; the sequence is HVALMLRGQT…SLEPKKQAVH (71 aa).

Belongs to the DHHC palmitoyltransferase family.

It is found in the membrane. It carries out the reaction L-cysteinyl-[protein] + hexadecanoyl-CoA = S-hexadecanoyl-L-cysteinyl-[protein] + CoA. Probable palmitoyltransferase that could catalyze the addition of palmitate onto various protein substrates. The protein is Probable palmitoyltransferase ZDHHC24 of Danio rerio (Zebrafish).